We begin with the raw amino-acid sequence, 89 residues long: Small ribosomal subunit protein uS15 (89 aa).

It belongs to the universal ribosomal protein uS15 family. As to quaternary structure, part of the 30S ribosomal subunit. Forms a bridge to the 50S subunit in the 70S ribosome, contacting the 23S rRNA.

In terms of biological role, one of the primary rRNA binding proteins, it binds directly to 16S rRNA where it helps nucleate assembly of the platform of the 30S subunit by binding and bridging several RNA helices of the 16S rRNA. Its function is as follows. Forms an intersubunit bridge (bridge B4) with the 23S rRNA of the 50S subunit in the ribosome. The protein is Small ribosomal subunit protein uS15 of Corynebacterium urealyticum (strain ATCC 43042 / DSM 7109).